Consider the following 244-residue polypeptide: MARKRRLTGEAALNAAYGKSDHAPLLEAWGVDLPDDLLRLALTHRSFANENGHLPNNERLEFLGDAVLGLAVAEQLYRQFPERAESDISKMRSGVVNMYALADVARRLGMGDYILLGRGEMLTGGKDKHSILADSVESMLGAIYLHHGFEVARATVLRLFAEKITEAPTTGLTMDWKTVLLEKLSDMKLPLPTYEVRGEGPEHDKTFYATVTIEDLVTHGEGHTKKVAEHAAAKQAVQKLNERA.

The RNase III domain maps to 21-148; sequence DHAPLLEAWG…MLGAIYLHHG (128 aa). Glutamate 61 provides a ligand contact to Mg(2+). Aspartate 65 is a catalytic residue. Mg(2+)-binding residues include aspartate 134 and glutamate 137. Residue glutamate 137 is part of the active site. One can recognise a DRBM domain in the interval 175 to 242; the sequence is DWKTVLLEKL…AKQAVQKLNE (68 aa).

This sequence belongs to the ribonuclease III family. Homodimer. It depends on Mg(2+) as a cofactor.

Its subcellular location is the cytoplasm. It carries out the reaction Endonucleolytic cleavage to 5'-phosphomonoester.. In terms of biological role, digests double-stranded RNA. Involved in the processing of primary rRNA transcript to yield the immediate precursors to the large and small rRNAs (23S and 16S). Processes some mRNAs, and tRNAs when they are encoded in the rRNA operon. Processes pre-crRNA and tracrRNA of type II CRISPR loci if present in the organism. This Corynebacterium jeikeium (strain K411) protein is Ribonuclease 3.